The following is a 273-amino-acid chain: Large ribosomal subunit protein uL2 (273 aa).

The disordered stretch occupies residues 221–263 (RGTAMNPVDHPHGGGEGRNFGKHPVSPWGLQTKGKKTRKNKRT). Residues 253–263 (KGKKTRKNKRT) show a composition bias toward basic residues.

The protein belongs to the universal ribosomal protein uL2 family. Part of the 50S ribosomal subunit. Forms a bridge to the 30S subunit in the 70S ribosome.

Its function is as follows. One of the primary rRNA binding proteins. Required for association of the 30S and 50S subunits to form the 70S ribosome, for tRNA binding and peptide bond formation. It has been suggested to have peptidyltransferase activity; this is somewhat controversial. Makes several contacts with the 16S rRNA in the 70S ribosome. The protein is Large ribosomal subunit protein uL2 of Buchnera aphidicola subsp. Baizongia pistaciae (strain Bp).